The primary structure comprises 309 residues: Putative taste receptor type 2 member 36 (309 aa).

Position 1 (Met-1) is a topological domain, extracellular. The helical transmembrane segment at 2 to 22 threads the bilayer; the sequence is ICFLLIILSILVVFAFVLGNF. At 23–46 the chain is on the cytoplasmic side; sequence SNGFIALVNVIDWVKRQKISSADQ. The chain crosses the membrane as a helical span at residues 47–67; that stretch reads ILTALVVSRVGLLWVILLHWY. Over 68–79 the chain is Extracellular; it reads SNVLNSALYSSE. A helical transmembrane segment spans residues 80–100; the sequence is VIIFISNAWAIINHFSIWLAT. At 101–126 the chain is on the cytoplasmic side; the sequence is SLSIFYLLKIVNFSRLIFHHLKRKAK. Residues 127–147 traverse the membrane as a helical segment; it reads SVVLVIVLGPLVFLVCHLVMK. Residues 148–181 lie on the Extracellular side of the membrane; the sequence is HTYINVWTKEYEGNVTWKIKLRNAIHLSNLTVST. N-linked (GlcNAc...) asparagine glycans are attached at residues Asn-161 and Asn-176. A helical transmembrane segment spans residues 182–202; it reads LANLIPFTLTLISFLLLIYSL. The Cytoplasmic segment spans residues 203–229; that stretch reads CKHLKKMQLHGKGSQDPSTKVHIKALQ. Residues 230 to 250 form a helical membrane-spanning segment; it reads TVTSFLLLCAIYFLSMIISVC. Over 251 to 259 the chain is Extracellular; that stretch reads NFGRLEKQP. Residues 260 to 280 form a helical membrane-spanning segment; sequence VFMFCQAIIFSYPSTHPFILI. Residues 281-309 lie on the Cytoplasmic side of the membrane; that stretch reads LGNKKLKQIFLSVFWQMRYWVKGEKPSSP.

The protein belongs to the G-protein coupled receptor T2R family.

Its subcellular location is the membrane. In terms of biological role, putative taste receptor which may play a role in the perception of bitterness. The protein is Putative taste receptor type 2 member 36 of Homo sapiens (Human).